We begin with the raw amino-acid sequence, 185 residues long: Transcription termination/antitermination protein NusG (185 aa).

In terms of domain architecture, KOW spans 134-163 (VGQQVRIVEGPFATFSGEVEEVMSERNKVR).

It belongs to the NusG family.

Functionally, participates in transcription elongation, termination and antitermination. The sequence is that of Transcription termination/antitermination protein NusG from Treponema pallidum (strain Nichols).